We begin with the raw amino-acid sequence, 607 residues long: Polyadenylate-binding protein 1-like (607 aa).

RRM domains lie at 11 to 89 (SSLY…WSHR), 99 to 175 (GNIF…HFKS), 191 to 268 (TNIY…RAQK), and 294 to 370 (VNLY…LAQR). In terms of domain architecture, PABC spans 523–600 (HQPLTVSMLA…AVAVLQVHRE (78 aa)).

Belongs to the polyadenylate-binding protein type-1 family. In terms of tissue distribution, expressed in ovary and testis.

It localises to the cytoplasm. Functionally, poly(A)-binding protein involved in oocyte maturation and early embryo development. It is required for cytosolic mRNA polyadenylation and translational activation of maternally stored mRNA in oocytes. The polypeptide is Polyadenylate-binding protein 1-like (Mus musculus (Mouse)).